A 238-amino-acid polypeptide reads, in one-letter code: Probable transcriptional regulatory protein YeeN (238 aa).

Belongs to the TACO1 family. YeeN subfamily.

It is found in the cytoplasm. The polypeptide is Probable transcriptional regulatory protein YeeN (Salmonella typhi).